The chain runs to 736 residues: 1,4-alpha-glucan branching enzyme GlgB (736 aa).

Asp-415 acts as the Nucleophile in catalysis. Glu-470 acts as the Proton donor in catalysis.

The protein belongs to the glycosyl hydrolase 13 family. GlgB subfamily. In terms of assembly, monomer.

The enzyme catalyses Transfers a segment of a (1-&gt;4)-alpha-D-glucan chain to a primary hydroxy group in a similar glucan chain.. It participates in glycan biosynthesis; glycogen biosynthesis. Its function is as follows. Catalyzes the formation of the alpha-1,6-glucosidic linkages in glycogen by scission of a 1,4-alpha-linked oligosaccharide from growing alpha-1,4-glucan chains and the subsequent attachment of the oligosaccharide to the alpha-1,6 position. This chain is 1,4-alpha-glucan branching enzyme GlgB, found in Burkholderia orbicola (strain AU 1054).